A 444-amino-acid chain; its full sequence is MGKNKTAYVCQECGYKSVKWLGKCPSCGEWNTLVEEFEPQSFSLVKKEPSLVLPVTDWEKEEHERETTGFESLDNALGGGLVKGQVILIAGEPGIGKSTLLLQISDRVANGKKVLYVSGEESGTQIALRAKRLGINNENLLVYPEVNLEKILQTLEKEKPSLLVLDSVQTIFSERLESSAGSVSQVREVTYRITEFCKEKNVPAFIVGQITKEGSIAGPKVLEHIVDTVLQFEGERFNFYRIVKVIKNRFGSTGEIAVFKMTDKGLEEVPEPSAFFISEKANAPGSVVFPHTEGSKPVLLEVQALVIPALYTTPQRRTQGFDPNRLALILAVLEKEAKIFTRDQDVFVNVAGGMSVKEPAADLAVAMAVVSSKKEKEVPKDFVIFGEVGLSGEIRAVHFGDLRLKEAKRFGFKKALIPKSLEIEIDGMEIYPVSHIQEAIEVLF.

The C4-type zinc-finger motif lies at 10 to 27 (CQECGYKSVKWLGKCPSC). 91–98 (GEPGIGKS) lines the ATP pocket. A RadA KNRFG motif motif is present at residues 247 to 251 (KNRFG). Residues 345 to 444 (DVFVNVAGGM…HIQEAIEVLF (100 aa)) are lon-protease-like.

This sequence belongs to the RecA family. RadA subfamily.

Its function is as follows. DNA-dependent ATPase involved in processing of recombination intermediates, plays a role in repairing DNA breaks. Stimulates the branch migration of RecA-mediated strand transfer reactions, allowing the 3' invading strand to extend heteroduplex DNA faster. Binds ssDNA in the presence of ADP but not other nucleotides, has ATPase activity that is stimulated by ssDNA and various branched DNA structures, but inhibited by SSB. Does not have RecA's homology-searching function. The sequence is that of DNA repair protein RadA from Aquifex aeolicus (strain VF5).